The chain runs to 1621 residues: Nestin (1621 aa).

M1 carries the N-acetylmethionine modification. The interval 1 to 7 (MEGCMGE) is head. The coil 1A stretch occupies residues 8–43 (ESFQMWELNRRLEAYLARVKALEEQNELLSAELGGL). The 306-residue stretch at 8 to 313 (ESFQMWELNR…TLLEAENSRL (306 aa)) folds into the IF rod domain. Residues 44-55 (RAQSADTSWRAH) are linker 1. The coil 1B stretch occupies residues 56 to 151 (ADDELAALRA…VAHEEERVGL (96 aa)). Residues 152–173 (NAQAACAPRCPAPPRGPPAPAP) form a linker 12 region. The tract at residues 174–192 (EVEELARRLGEAWRGAVRG) is coil 2A. The linker 2 stretch occupies residues 193–195 (YQE). The coil 2B stretch occupies residues 196-313 (RVAHMETSLG…TLLEAENSRL (118 aa)). S311 bears the Phosphoserine mark. The tail stretch occupies residues 314–1621 (QTPGGGSKTS…DRESWSSGED (1308 aa)). T315 is modified (phosphothreonine). At S325 the chain carries Phosphoserine. Residue T338 is modified to Phosphothreonine. S355 and S358 each carry phosphoserine. Position 388 is a phosphothreonine (T388). Phosphoserine occurs at positions 398, 471, 476, 548, 564, 578, 588, 638, 680, 702, 746, and 768. Positions 439 to 490 (SVLPGPEEPGGQRQEASTGQSPEDHASLAPPLSPDHSSLEAKDGESGGSRVF) are disordered. The tract at residues 670 to 788 (LEKENQEPLR…PPEKVDLEPL (119 aa)) is disordered. Composition is skewed to basic and acidic residues over residues 687 to 725 (EALR…LKTL), 736 to 770 (LETE…RSLG), and 779 to 788 (PPEKVDLEPL). The residue at position 790 (S790) is a Phosphoserine. K811 is covalently cross-linked (Glycyl lysine isopeptide (Lys-Gly) (interchain with G-Cter in SUMO1); alternate). K811 participates in a covalent cross-link: Glycyl lysine isopeptide (Lys-Gly) (interchain with G-Cter in SUMO2); alternate. 3 positions are modified to phosphoserine: S820, S831, and S842. T851 carries the post-translational modification Phosphothreonine. A phosphoserine mark is found at S894, S905, S913, and S934. The disordered stretch occupies residues 895–1593 (LGAWNLENLR…GSALKTSWAG (699 aa)). Basic and acidic residues-rich tracts occupy residues 904 to 936 (RSPE…RSLE), 949 to 960 (QRWEDTVEKDQE), 980 to 994 (LNLR…KEEV), and 1012 to 1024 (GHPE…EQRG). S1016 carries the phosphoserine modification. Residues 1085 to 1098 (GSEPAMGESAAGAE) show a composition bias toward low complexity. Residues 1099-1110 (PGPGQGVGGLGD) are compositionally biased toward gly residues. Composition is skewed to basic and acidic residues over residues 1129 to 1145 (LEAK…KDLE) and 1159 to 1184 (GKSR…RGAE). Phosphoserine occurs at positions 1261, 1282, 1286, 1310, 1347, 1409, 1418, and 1452. The segment covering 1275–1292 (PQEEGEESREESEEDELG) has biased composition (acidic residues). Residues 1409 to 1428 (SDGFADEEESGEEGEEDQEE) show a composition bias toward acidic residues. 2 stretches are compositionally biased toward low complexity: residues 1440 to 1453 (GSSV…SSSQ) and 1460 to 1470 (SDSVSVSVPWD). Positions 1486–1495 (ETESQDSAEP) are enriched in polar residues. Phosphoserine is present on residues S1496, S1498, S1577, S1617, and S1618.

It belongs to the intermediate filament family. As to quaternary structure, forms homodimers and homotetramers in vitro. In mixtures with other intermediate filament proteins such as vimentin and alpha-internexin, tis protein preferentially forms heterodimers which can assemble to form intermediate filaments if nestin does not exceed 25%. Interacts with FHOD3. In terms of processing, constitutively phosphorylated. This increases during mitosis when the cytoplasmic intermediate filament network is reorganized. As to expression, CNS stem cells.

Required for brain and eye development. Promotes the disassembly of phosphorylated vimentin intermediate filaments (IF) during mitosis and may play a role in the trafficking and distribution of IF proteins and other cellular factors to daughter cells during progenitor cell division. Required for survival, renewal and mitogen-stimulated proliferation of neural progenitor cells. The protein is Nestin (NES) of Homo sapiens (Human).